The primary structure comprises 224 residues: Triosephosphate isomerase (224 aa).

Residue 9 to 11 (NFK) participates in substrate binding. The Electrophile role is filled by His-93. Glu-141 acts as the Proton acceptor in catalysis. Substrate-binding positions include Ile-146, Gly-181, and 202–203 (AS).

The protein belongs to the triosephosphate isomerase family. In terms of assembly, homotetramer; dimer of dimers.

It is found in the cytoplasm. The enzyme catalyses D-glyceraldehyde 3-phosphate = dihydroxyacetone phosphate. It participates in carbohydrate biosynthesis; gluconeogenesis. It functions in the pathway carbohydrate degradation; glycolysis; D-glyceraldehyde 3-phosphate from glycerone phosphate: step 1/1. In terms of biological role, involved in the gluconeogenesis. Catalyzes stereospecifically the conversion of dihydroxyacetone phosphate (DHAP) to D-glyceraldehyde-3-phosphate (G3P). This chain is Triosephosphate isomerase, found in Pyrobaculum arsenaticum (strain DSM 13514 / JCM 11321 / PZ6).